The sequence spans 433 residues: 23S rRNA (uracil(1939)-C(5))-methyltransferase RlmD (433 aa).

The region spanning 10–68 (RTTTRQIITVSVNDLDSFGQGVARHNGKTLFIPGLLPQENAEVTVTEDKKQYARAKVVR) is the TRAM domain. Cysteine 81, cysteine 87, cysteine 90, and cysteine 162 together coordinate [4Fe-4S] cluster. Positions 265, 294, 299, 315, 342, and 363 each coordinate S-adenosyl-L-methionine. The active-site Nucleophile is cysteine 389.

This sequence belongs to the class I-like SAM-binding methyltransferase superfamily. RNA M5U methyltransferase family. RlmD subfamily.

It catalyses the reaction uridine(1939) in 23S rRNA + S-adenosyl-L-methionine = 5-methyluridine(1939) in 23S rRNA + S-adenosyl-L-homocysteine + H(+). Catalyzes the formation of 5-methyl-uridine at position 1939 (m5U1939) in 23S rRNA. In Escherichia coli O6:K15:H31 (strain 536 / UPEC), this protein is 23S rRNA (uracil(1939)-C(5))-methyltransferase RlmD.